A 164-amino-acid polypeptide reads, in one-letter code: MRLTSKGRYAVTAMLDVALHSQEGPVPLADISERQGISLSYLEQLFSRLRKNGLVSSVRGPGGGYLLGRDAGRIFVAEVISAVDESVDATRCQGKEGCQGGDRCLTHALWRDLSERITSFLGSISLEELVKNQEVLDVADRQDSDKRRTPNGRPQETINVNLRA.

The region spanning Arg2–Lys131 is the HTH rrf2-type domain. Positions Leu28 to Lys51 form a DNA-binding region, H-T-H motif. Positions 92, 98, and 104 each coordinate [2Fe-2S] cluster. Residues Asp140–Ala164 are disordered. Residues Gly152–Ala164 show a composition bias toward polar residues.

The cofactor is [2Fe-2S] cluster.

Functionally, regulates the transcription of several operons and genes involved in the biogenesis of Fe-S clusters and Fe-S-containing proteins. The protein is HTH-type transcriptional regulator IscR of Xenorhabdus nematophila (strain ATCC 19061 / DSM 3370 / CCUG 14189 / LMG 1036 / NCIMB 9965 / AN6).